We begin with the raw amino-acid sequence, 353 residues long: Farnesyl pyrophosphate synthase (353 aa).

Residues Lys57, Arg60, and Gln96 each contribute to the isopentenyl diphosphate site. Lys57 is subject to N6-(2-hydroxyisobutyryl)lysine; alternate. N6-acetyllysine; alternate is present on Lys57. Asp103 and Asp107 together coordinate Mg(2+). Arg112 provides a ligand contact to dimethylallyl diphosphate. Arg113 contributes to the isopentenyl diphosphate binding site. Dimethylallyl diphosphate-binding residues include Lys200, Thr201, Gln240, Lys257, and Lys266.

The protein belongs to the FPP/GGPP synthase family. As to quaternary structure, homodimer. Interacts with RSAD2. Interacts with bovine leukemia virus (BLV) protein G4. Requires Mg(2+) as cofactor.

Its subcellular location is the cytoplasm. It catalyses the reaction isopentenyl diphosphate + dimethylallyl diphosphate = (2E)-geranyl diphosphate + diphosphate. It carries out the reaction isopentenyl diphosphate + (2E)-geranyl diphosphate = (2E,6E)-farnesyl diphosphate + diphosphate. Its pathway is isoprenoid biosynthesis; farnesyl diphosphate biosynthesis; farnesyl diphosphate from geranyl diphosphate and isopentenyl diphosphate: step 1/1. It functions in the pathway isoprenoid biosynthesis; geranyl diphosphate biosynthesis; geranyl diphosphate from dimethylallyl diphosphate and isopentenyl diphosphate: step 1/1. With respect to regulation, inactivated by interferon-induced RSAD2. This inactivation may result of disruption of lipid rafts at the plasma membrane, and thus have an antiviral effect since many enveloped viruses need lipid rafts to bud efficiently out of the cell. In terms of biological role, key enzyme in isoprenoid biosynthesis which catalyzes the formation of farnesyl diphosphate (FPP), a precursor for several classes of essential metabolites including sterols, dolichols, carotenoids, and ubiquinones. FPP also serves as substrate for protein farnesylation and geranylgeranylation. Catalyzes the sequential condensation of isopentenyl pyrophosphate with the allylic pyrophosphates, dimethylallyl pyrophosphate, and then with the resultant geranylpyrophosphate to the ultimate product farnesyl pyrophosphate. The protein is Farnesyl pyrophosphate synthase (FDPS) of Bos taurus (Bovine).